We begin with the raw amino-acid sequence, 409 residues long: U-box domain-containing protein 28 (409 aa).

One can recognise a U-box domain in the interval 10–84; it reads TVPCFFKCPI…DHWSDSINRR (75 aa). ARM repeat units follow at residues 178-218, 219-261, and 263-304; these read RLSN…FIAV, DAES…AIAS, and KRVK…AISS.

It catalyses the reaction S-ubiquitinyl-[E2 ubiquitin-conjugating enzyme]-L-cysteine + [acceptor protein]-L-lysine = [E2 ubiquitin-conjugating enzyme]-L-cysteine + N(6)-ubiquitinyl-[acceptor protein]-L-lysine.. The protein operates within protein modification; protein ubiquitination. Functions as an E3 ubiquitin ligase. The polypeptide is U-box domain-containing protein 28 (PUB28) (Arabidopsis thaliana (Mouse-ear cress)).